A 179-amino-acid polypeptide reads, in one-letter code: Translation initiation factor IF-3 (179 aa).

Belongs to the IF-3 family. In terms of assembly, monomer.

Its subcellular location is the cytoplasm. In terms of biological role, IF-3 binds to the 30S ribosomal subunit and shifts the equilibrium between 70S ribosomes and their 50S and 30S subunits in favor of the free subunits, thus enhancing the availability of 30S subunits on which protein synthesis initiation begins. This chain is Translation initiation factor IF-3, found in Lactococcus lactis subsp. lactis (strain IL1403) (Streptococcus lactis).